The primary structure comprises 209 residues: Large ribosomal subunit protein uL3 (209 aa).

This sequence belongs to the universal ribosomal protein uL3 family. Part of the 50S ribosomal subunit. Forms a cluster with proteins L14 and L19.

In terms of biological role, one of the primary rRNA binding proteins, it binds directly near the 3'-end of the 23S rRNA, where it nucleates assembly of the 50S subunit. The sequence is that of Large ribosomal subunit protein uL3 from Nitratidesulfovibrio vulgaris (strain ATCC 29579 / DSM 644 / CCUG 34227 / NCIMB 8303 / VKM B-1760 / Hildenborough) (Desulfovibrio vulgaris).